The chain runs to 274 residues: Ribosomal RNA small subunit methyltransferase A (274 aa).

S-adenosyl-L-methionine contacts are provided by His15, Leu17, Gly42, Glu64, Asp89, and Asn109.

It belongs to the class I-like SAM-binding methyltransferase superfamily. rRNA adenine N(6)-methyltransferase family. RsmA subfamily.

Its subcellular location is the cytoplasm. The enzyme catalyses adenosine(1518)/adenosine(1519) in 16S rRNA + 4 S-adenosyl-L-methionine = N(6)-dimethyladenosine(1518)/N(6)-dimethyladenosine(1519) in 16S rRNA + 4 S-adenosyl-L-homocysteine + 4 H(+). Specifically dimethylates two adjacent adenosines (A1518 and A1519) in the loop of a conserved hairpin near the 3'-end of 16S rRNA in the 30S particle. May play a critical role in biogenesis of 30S subunits. This Synechococcus sp. (strain CC9902) protein is Ribosomal RNA small subunit methyltransferase A.